The chain runs to 370 residues: Aminomethyltransferase (370 aa).

It belongs to the GcvT family. In terms of assembly, the glycine cleavage system is composed of four proteins: P, T, L and H.

It carries out the reaction N(6)-[(R)-S(8)-aminomethyldihydrolipoyl]-L-lysyl-[protein] + (6S)-5,6,7,8-tetrahydrofolate = N(6)-[(R)-dihydrolipoyl]-L-lysyl-[protein] + (6R)-5,10-methylene-5,6,7,8-tetrahydrofolate + NH4(+). The glycine cleavage system catalyzes the degradation of glycine. The chain is Aminomethyltransferase from Clostridium botulinum (strain Loch Maree / Type A3).